We begin with the raw amino-acid sequence, 152 residues long: Ribosome maturation factor RimP (152 aa).

It belongs to the RimP family.

Its subcellular location is the cytoplasm. Its function is as follows. Required for maturation of 30S ribosomal subunits. The sequence is that of Ribosome maturation factor RimP from Yersinia enterocolitica serotype O:8 / biotype 1B (strain NCTC 13174 / 8081).